The chain runs to 144 residues: MLLPKRVKWRRVQRGRLKGKSKGGNSVAFGEYGLQALEAAWITSRQIEAARIAMTRYIKRGGKVWIKIFPDKPITAKPAETRMGSGKGSPEYWVAVVKPGRIMFELAGVPEDTAKEAMRLAMHKLPIKCKFVKREEVGGEANES.

The protein belongs to the universal ribosomal protein uL16 family. Part of the 50S ribosomal subunit.

Functionally, binds 23S rRNA and is also seen to make contacts with the A and possibly P site tRNAs. The chain is Large ribosomal subunit protein uL16 from Heliobacterium modesticaldum (strain ATCC 51547 / Ice1).